The primary structure comprises 304 residues: Acetylglutamate kinase (304 aa).

Residues 82–83, Arg104, and Asn197 contribute to the substrate site; that span reads GG.

Belongs to the acetylglutamate kinase family. ArgB subfamily.

It is found in the cytoplasm. It carries out the reaction N-acetyl-L-glutamate + ATP = N-acetyl-L-glutamyl 5-phosphate + ADP. It participates in amino-acid biosynthesis; L-arginine biosynthesis; N(2)-acetyl-L-ornithine from L-glutamate: step 2/4. Catalyzes the ATP-dependent phosphorylation of N-acetyl-L-glutamate. The chain is Acetylglutamate kinase from Prochlorococcus marinus (strain SARG / CCMP1375 / SS120).